Here is a 745-residue protein sequence, read N- to C-terminus: MTVKLDFEECLKDSPRFRASVELVEAEVSELETRLEKLLKLGNGLLESGRHYLAASRAFIVGICDLAHLGPPEPMMAECLDKFTQSLSHKLDSHAELLDATQHTLQRQIQTLVKEGLRSFREAGRDFWRGAESLEAALTHNAEVPRRRAQEAEEAGAALKVARAGYRGRALDYALQINVIEDKRKFDIMEFVLRLVEAQATHFQQGHEELSQLAQYRKELGGQLHQLVLNSAREKRDMEQRHVLLKQKELGGEEPEPSLKEGPGGLVMEGHLFKRASNAFKTWSRRWFTIQSNQLVYQKRYKDPVTVVVDDLRLCTVKLCPDSERRFCFEVVSPSKSCLLQSDSERLMQLWVSAVQSSIATAFSQARLDDSPRGLGQGSGHLAISSAATLGPGGLTRGREPGGVGHVAAQVQSVDGNAQCCDCREPAPEWASINLGVTLCIQCSGIHRSLGVHFSKVRSLTLDSWEPELVKLMCELGNVVINQIYEARVEAMAVKKPGPSCSRQEKEAWIHAKYVEKKFLTKLPEIRGRRGGRGPPRGHPPVPPKPGLIRPKPGSFRSKPEPPSEDLQSLHPGALLFRAAGHPPSLPTMADALAHGADVNWVNGGQENATPLIQATAAVRVLNSLLACEFLLQNGANVNQVDNQGRGPLHHATILGHTGLACLFLKRGADLGVRDSEGRDPLTIAVETANADIVTLLRLAKMREADAAQGQAGDETYLDIFRDFSLMASDDPEKLSRRSHDLHTL.

The BAR domain occupies 1–226 (MTVKLDFEEC…RKELGGQLHQ (226 aa)). The tract at residues 1 to 382 (MTVKLDFEEC…RGLGQGSGHL (382 aa)) is required for formation of endosomal tubules when overexpressed with PIP5K1C. The 96-residue stretch at 265 to 360 (GLVMEGHLFK…WVSAVQSSIA (96 aa)) folds into the PH domain. One can recognise an Arf-GAP domain in the interval 405–527 (GHVAAQVQSV…KFLTKLPEIR (123 aa)). A required for interaction with GULP1 region spans residues 405-745 (GHVAAQVQSV…SRRSHDLHTL (341 aa)). The segment at 420-443 (CCDCREPAPEWASINLGVTLCIQC) adopts a C4-type zinc-finger fold. Tyrosine 485 carries the 3'-nitrotyrosine modification. Residues 525-567 (EIRGRRGGRGPPRGHPPVPPKPGLIRPKPGSFRSKPEPPSEDL) form a prevents interaction with ITGB1 when S-554 is not phosphorylated region. A disordered region spans residues 525–569 (EIRGRRGGRGPPRGHPPVPPKPGLIRPKPGSFRSKPEPPSEDLQS). The segment covering 537-546 (RGHPPVPPKP) has biased composition (pro residues). Phosphoserine; by PKB is present on serine 555. 3 ANK repeats span residues 607-640 (ENAT…NVNQ), 644-673 (QGRG…DLGV), and 677-707 (EGRD…EADA).

As to quaternary structure, banana-shaped homodimer laterally assembling into tetramers, the tetramers further pack helically onto the membrane. Interacts with GTP-bound ARF6. Interacts with third cytoplasmic loop of SLC2A4/GLUT4. Interacts with CLTC. Interacts with GULP1. Forms a complex with GDP-bound ARF6 and GULP1. Interacts with ITGB1; required for ITGB1 recycling. In terms of processing, phosphorylation at Ser-555 by PKB is required for interaction with ITGB1, export of ITGB1 from recycling endosomes to the cell surface and ITGB1-dependent cell migration.

The protein localises to the recycling endosome membrane. Its activity is regulated as follows. GAP activity stimulated by phosphatidylinositol 4,5-bisphosphate (PIP2) and phosphatidic acid. In terms of biological role, GTPase-activating protein (GAP) for ADP ribosylation factor 6 (ARF6) required for clathrin-dependent export of proteins from recycling endosomes to trans-Golgi network and cell surface. Required for regulated export of ITGB1 from recycling endosomes to the cell surface and ITGB1-dependent cell migration. In Bos taurus (Bovine), this protein is Arf-GAP with coiled-coil, ANK repeat and PH domain-containing protein 1 (ACAP1).